The sequence spans 421 residues: Probable mitochondrial chaperone BCS1-A (421 aa).

Topologically, residues 1–10 (MNHLKDQSKS) are mitochondrial intermembrane. A helical membrane pass occupies residues 11 to 31 (IVLGISSGIGIFLISGGINIF). The Mitochondrial matrix portion of the chain corresponds to 32-421 (KNVGQYILNR…VQSITPFNLN (390 aa)). 228–235 (GEPGNGKS) contacts ATP.

This sequence belongs to the AAA ATPase family. BCS1 subfamily.

The protein localises to the mitochondrion inner membrane. The enzyme catalyses ATP + H2O = ADP + phosphate + H(+). In terms of biological role, chaperone necessary for the assembly of mitochondrial respiratory chain complex III. This is Probable mitochondrial chaperone BCS1-A (bcs1la) from Dictyostelium discoideum (Social amoeba).